A 321-amino-acid polypeptide reads, in one-letter code: Malate dehydrogenase (321 aa).

Residues 13-18 (GAGNIG) and aspartate 38 contribute to the NAD(+) site. Substrate contacts are provided by arginine 87 and arginine 93. NAD(+) contacts are provided by residues asparagine 100 and 123–125 (VTN). Positions 125 and 156 each coordinate substrate. Histidine 180 (proton acceptor) is an active-site residue.

The protein belongs to the LDH/MDH superfamily. MDH type 3 family.

The enzyme catalyses (S)-malate + NAD(+) = oxaloacetate + NADH + H(+). In terms of biological role, catalyzes the reversible oxidation of malate to oxaloacetate. The protein is Malate dehydrogenase of Anaplasma phagocytophilum (strain HZ).